Here is a 107-residue protein sequence, read N- to C-terminus: L-rhamnose mutarotase (107 aa).

Y21 is a binding site for substrate. Catalysis depends on H25, which acts as the Proton donor. Residues Y44 and 79 to 80 each bind substrate; that span reads WW.

Belongs to the rhamnose mutarotase family. As to quaternary structure, homodimer.

It localises to the cytoplasm. It catalyses the reaction alpha-L-rhamnose = beta-L-rhamnose. The protein operates within carbohydrate metabolism; L-rhamnose metabolism. In terms of biological role, involved in the anomeric conversion of L-rhamnose. The protein is L-rhamnose mutarotase of Agrobacterium fabrum (strain C58 / ATCC 33970) (Agrobacterium tumefaciens (strain C58)).